The following is a 369-amino-acid chain: 4-hydroxy-3-methylbut-2-en-1-yl diphosphate synthase (flavodoxin) (369 aa).

Residues Cys270, Cys273, Cys305, and Glu312 each contribute to the [4Fe-4S] cluster site.

It belongs to the IspG family. The cofactor is [4Fe-4S] cluster.

It carries out the reaction (2E)-4-hydroxy-3-methylbut-2-enyl diphosphate + oxidized [flavodoxin] + H2O + 2 H(+) = 2-C-methyl-D-erythritol 2,4-cyclic diphosphate + reduced [flavodoxin]. It participates in isoprenoid biosynthesis; isopentenyl diphosphate biosynthesis via DXP pathway; isopentenyl diphosphate from 1-deoxy-D-xylulose 5-phosphate: step 5/6. In terms of biological role, converts 2C-methyl-D-erythritol 2,4-cyclodiphosphate (ME-2,4cPP) into 1-hydroxy-2-methyl-2-(E)-butenyl 4-diphosphate. In Haemophilus ducreyi (strain 35000HP / ATCC 700724), this protein is 4-hydroxy-3-methylbut-2-en-1-yl diphosphate synthase (flavodoxin).